We begin with the raw amino-acid sequence, 413 residues long: Tyrosine--tRNA ligase (413 aa).

The 'HIGH' region motif lies at 59–68 (PTAPDIHLGH). The 'KMSKS' region motif lies at 243 to 247 (KMSKS). Lys-246 contributes to the ATP binding site. Positions 351-411 (LAIGQLLKQA…GKRRFARVTL (61 aa)) constitute an S4 RNA-binding domain.

Belongs to the class-I aminoacyl-tRNA synthetase family. TyrS type 2 subfamily. Homodimer.

The protein resides in the cytoplasm. It carries out the reaction tRNA(Tyr) + L-tyrosine + ATP = L-tyrosyl-tRNA(Tyr) + AMP + diphosphate + H(+). Catalyzes the attachment of tyrosine to tRNA(Tyr) in a two-step reaction: tyrosine is first activated by ATP to form Tyr-AMP and then transferred to the acceptor end of tRNA(Tyr). The polypeptide is Tyrosine--tRNA ligase (Burkholderia pseudomallei (strain 1710b)).